A 378-amino-acid chain; its full sequence is Putative gustatory receptor 22f (378 aa).

Residues 1–13 (MKMFQPRRGFSCH) lie on the Cytoplasmic side of the membrane. A helical membrane pass occupies residues 14-34 (LAWFMLQTTLYASWLLGLFPF). The Extracellular portion of the chain corresponds to 35–48 (TFDSRRKQLKRSRW). The chain crosses the membrane as a helical span at residues 49–69 (LLLYGFVLHSLAMCLAMSSHL). Topologically, residues 70-88 (ASKQRRKYNAFERNPLLEK) are cytoplasmic. The helical transmembrane segment at 89–109 (IYMQFQVTTFFTISVLLLMNV) threads the bilayer. Residues 110–143 (WKSNTVRKIANELLTLEGQVKDLLTLKNCPNFNC) are Extracellular-facing. Residues 144 to 164 (FVIKKHVAAIGQFVISIYFCL) form a helical membrane-spanning segment. At 165-178 (CQENSYPKILKILC) the chain is on the cytoplasmic side. A helical membrane pass occupies residues 179–199 (CLPSVGLQLIIMHFHTEIILV). At 200-245 (YRYVWLVNETLEDSHHLSSSRIHALASLYDRLLKLSELVVACNDLQ) the chain is on the extracellular side. The N-linked (GlcNAc...) asparagine glycan is linked to Asn-207. Residues 246–266 (LILMLIIYLIGNTVQIFFLIV) form a helical membrane-spanning segment. Topologically, residues 267–354 (LGVSMNKRYI…LCGLFSINHN (88 aa)) are cytoplasmic. The helical transmembrane segment at 355–375 (MGFQMIITSFLYLVYLLQFDF) threads the bilayer. Over 376 to 378 (MNL) the chain is Extracellular.

The protein belongs to the insect chemoreceptor superfamily. Gustatory receptor (GR) family. Gr22e subfamily. In terms of tissue distribution, taste bristles in the foreleg and labial palps.

Its subcellular location is the cell membrane. In terms of biological role, probable gustatory receptor which mediates acceptance or avoidance behavior, depending on its substrates. The polypeptide is Putative gustatory receptor 22f (Gr22f) (Drosophila melanogaster (Fruit fly)).